Consider the following 419-residue polypeptide: Probable pectate lyase C (419 aa).

The N-terminal stretch at 1–19 (MRLTPSLISCLSLLHFTSA) is a signal peptide. N-linked (GlcNAc...) asparagine glycosylation is found at N48, N164, and N201. Residue R204 is part of the active site. The region spanning 261 to 296 (NENFHAYVETNYYDSDKDGTLNGSELGVDSTNYGGM) is the EF-hand domain. The Ca(2+) site is built by D274, D276, D278, and T280. An N-linked (GlcNAc...) asparagine glycan is attached at N282. E285 lines the Ca(2+) pocket. The interval 350-395 (ALISDEADMGGAGDLDQGTTPTDTDGDGIPDDAEAELGTDPNTADS) is disordered. Residues 363–372 (DLDQGTTPTD) are compositionally biased toward low complexity. Over residues 373-386 (TDGDGIPDDAEAEL) the composition is skewed to acidic residues.

This sequence belongs to the polysaccharide lyase 1 family. It depends on Ca(2+) as a cofactor.

It is found in the secreted. It carries out the reaction Eliminative cleavage of (1-&gt;4)-alpha-D-galacturonan to give oligosaccharides with 4-deoxy-alpha-D-galact-4-enuronosyl groups at their non-reducing ends.. Pectinolytic enzyme consist of four classes of enzymes: pectin lyase, polygalacturonase, pectin methylesterase and rhamnogalacturonase. Among pectinolytic enzymes, pectin lyase is the most important in depolymerization of pectin, since it cleaves internal glycosidic bonds of highly methylated pectins. Favors pectate, the anion, over pectin, the methyl ester. In Aspergillus flavus (strain ATCC 200026 / FGSC A1120 / IAM 13836 / NRRL 3357 / JCM 12722 / SRRC 167), this protein is Probable pectate lyase C (plyC).